The primary structure comprises 118 residues: Non-specific lipid-transfer protein D (118 aa).

Positions 1 to 25 (MAGLMKLACLIFACMIVAGPITSNA) are cleaved as a signal peptide. Intrachain disulfides connect cysteine 29–cysteine 77, cysteine 39–cysteine 54, cysteine 55–cysteine 100, and cysteine 75–cysteine 114.

Belongs to the plant LTP family.

Functionally, plant non-specific lipid-transfer proteins transfer phospholipids as well as galactolipids across membranes. May play a role in wax or cutin deposition in the cell walls of expanding epidermal cells and certain secretory tissues. This chain is Non-specific lipid-transfer protein D (WAX9D), found in Brassica oleracea var. italica (Broccoli).